The following is a 620-amino-acid chain: Proline--tRNA ligase (620 aa).

Belongs to the class-II aminoacyl-tRNA synthetase family. ProS type 1 subfamily. As to quaternary structure, homodimer.

The protein localises to the cytoplasm. The catalysed reaction is tRNA(Pro) + L-proline + ATP = L-prolyl-tRNA(Pro) + AMP + diphosphate. Its function is as follows. Catalyzes the attachment of proline to tRNA(Pro) in a two-step reaction: proline is first activated by ATP to form Pro-AMP and then transferred to the acceptor end of tRNA(Pro). As ProRS can inadvertently accommodate and process non-cognate amino acids such as alanine and cysteine, to avoid such errors it has two additional distinct editing activities against alanine. One activity is designated as 'pretransfer' editing and involves the tRNA(Pro)-independent hydrolysis of activated Ala-AMP. The other activity is designated 'posttransfer' editing and involves deacylation of mischarged Ala-tRNA(Pro). The misacylated Cys-tRNA(Pro) is not edited by ProRS. This chain is Proline--tRNA ligase, found in Streptococcus thermophilus (strain CNRZ 1066).